The primary structure comprises 484 residues: MSFRKVVRQSKFRHVFGQPVKNDQCYEDIRVSRVTWDSTFCAVNPKFLAVIVEASGGGAFMVLPLNKTGRIDKAYPTVCGHTGPVLDIDWCPHNDEVIASGSEDCTVMVWQIPENGLTSPLTEPVVVLEGHTKRVGIITWHPTARNVLLSAGCDNVVLIWNVGTAEELYRLDSLHPDLIYNVSWNHNGSLFCSACKDKSVRIIDPRRGTLVAEREKAHEGARPMRAIFLADGKVFTTGFSRMSERQLALWDPENLEEPMALQELDSSNGALLPFYDPDTSVVYVCGKGDSSIRYFEITDEPPYIHFLNTFTSKEPQRGMGSMPKRGLEVSKCEIARFYKLHERKCEPIVMTVPRKSDLFQDDLYPDTAGPEAALEAEDWVSGQDANPILISLREAYVPSKQRDLKVSRRNVLSDSRPASYSRSGASTATAVTDVPSGNLAGAGEAGKLEEVMQELRALRMLVKEQGERISRLEEQLGRMENGDT.

A Phosphoserine modification is found at serine 2. WD repeat units follow at residues 80–120 (GHTG…LTSP), 130–170 (GHTK…ELYR), 174–213 (LHPD…LVAE), 217–260 (AHEG…EPMA), and 265–305 (DSSN…PYIH). Positions 404-446 (LKVSRRNVLSDSRPASYSRSGASTATAVTDVPSGNLAGAGEAG) are disordered. Over residues 410-430 (NVLSDSRPASYSRSGASTATA) the composition is skewed to polar residues. A coiled-coil region spans residues 444–482 (EAGKLEEVMQELRALRMLVKEQGERISRLEEQLGRMENG).

Belongs to the WD repeat coronin family. As to quaternary structure, forms homooligomers, but does not form complexes with the other coronins. Interacts with Arp2/3 complex components, including ACTR2, ARPC1B and ARPC2. Binds actin. In terms of processing, phosphorylation on Ser-2 regulates the interaction with the Arp2/3 complex and cell motility in fibroblasts. Phosphorylation does not seem to affect subcellular location. As to expression, ubiquitous.

Its subcellular location is the cytoplasm. The protein localises to the cytoskeleton. It localises to the stress fiber. Its function is as follows. Regulates leading edge dynamics and cell motility in fibroblasts. May be involved in cytokinesis and signal transduction. This chain is Coronin-1B (Coro1b), found in Mus musculus (Mouse).